The primary structure comprises 115 residues: OV39 antigen (115 aa).

The sequence is that of OV39 antigen (OV39) from Onchocerca volvulus.